Reading from the N-terminus, the 527-residue chain is UDP-glucuronosyltransferase 2A1 (527 aa).

An N-terminal signal peptide occupies residues 1–20; sequence MLKNILLWSLQLSLLGMSLG. Over 21-490 the chain is Extracellular; that stretch reads GNVLIWPMEG…LSWFQYHSLD (470 aa). An N-linked (GlcNAc...) asparagine glycan is attached at asparagine 49. Lysine 134 carries the N6-succinyllysine modification. N-linked (GlcNAc...) asparagine glycosylation is present at asparagine 313. The chain crosses the membrane as a helical span at residues 491 to 507; sequence VIGFLLACMASAILLVI. At 508 to 527 the chain is on the cytoplasmic side; sequence KCCLFVFQKIGKTXKKNKRD.

It belongs to the UDP-glycosyltransferase family. Olfactory epithelium. Mainly found in the sustentacular cells and to a lesser extent in Bowman's gland cells. Also expressed in the olfactory sensory neuron nuclei. Neuronal localization within the olfactory bulb is mainly found in the deeper granular cells.

It localises to the membrane. It carries out the reaction glucuronate acceptor + UDP-alpha-D-glucuronate = acceptor beta-D-glucuronoside + UDP + H(+). The enzyme catalyses 16beta,17beta-estriol + UDP-alpha-D-glucuronate = 16beta,17beta-estriol 16-O-(beta-D-glucuronate) + UDP + H(+). The catalysed reaction is 16alpha,17alpha-estriol + UDP-alpha-D-glucuronate = 16alpha,17alpha-estriol 16-O-(beta-D-glucuronate) + UDP + H(+). It catalyses the reaction 17alpha-estradiol + UDP-alpha-D-glucuronate = 17alpha-estradiol 17-O-(beta-D-glucuronate) + UDP + H(+). It carries out the reaction 17alpha-estradiol + UDP-alpha-D-glucuronate = 17alpha-estradiol 3-O-(beta-D-glucuronate) + UDP + H(+). The enzyme catalyses 17beta-estradiol + UDP-alpha-D-glucuronate = 17beta-estradiol 3-O-(beta-D-glucuronate) + UDP + H(+). The catalysed reaction is 17beta-estradiol + UDP-alpha-D-glucuronate = 17beta-estradiol 17-O-(beta-D-glucuronate) + UDP + H(+). It catalyses the reaction testosterone + UDP-alpha-D-glucuronate = testosterone 17-O-(beta-D-glucuronate) + UDP + H(+). It carries out the reaction epitestosterone + UDP-alpha-D-glucuronate = epitestosterone 17-O-(beta-D-glucuronate) + UDP + H(+). The enzyme catalyses lithocholate + UDP-alpha-D-glucuronate = lithocholoyl-3-O-(beta-D-glucuronate) + UDP + H(+). The catalysed reaction is lithocholate + UDP-alpha-D-glucuronate = lithocholoyl-24-O-(beta-D-glucuronate) + UDP. It catalyses the reaction deoxycholate + UDP-alpha-D-glucuronate = deoxycholoyl-24-O-(beta-D-glucuronate) + UDP. It carries out the reaction hyodeoxycholate + UDP-alpha-D-glucuronate = hyodeoxycholate 6-O-(beta-D-glucuronate) + UDP + H(+). The enzyme catalyses hyocholate + UDP-alpha-D-glucuronate = hyocholoyl-24-O-(beta-D-glucuronate) + UDP. Functionally, UDP-glucuronosyltransferase (UGT) that catalyzes phase II biotransformation reactions in which lipophilic substrates are conjugated with glucuronic acid to increase the metabolite's water solubility, thereby facilitating excretion into either the urine or bile. Essential for the elimination and detoxification of drugs, xenobiotics and endogenous compounds. Catalyzes the glucuronidation of endogenous steroid hormones such as androgens (testosterones) and estrogens (estradiol and estriol). Contributes to bile acid (BA) detoxification by catalyzing the glucuronidation of BA substrates, which are natural detergents for dietary lipids absorption. Shows a high affinity to aliphatic odorants such as citronellol as well as olfactory tissue specificity, and therefore may be involved in olfaction. This chain is UDP-glucuronosyltransferase 2A1, found in Rattus norvegicus (Rat).